Consider the following 203-residue polypeptide: uncharacterized protein (203 aa).

The helical transmembrane segment at 171–191 (VGYLSIWLKEYWYLVVLFVLI) threads the bilayer.

It is found in the membrane. This is an uncharacterized protein from Methanocaldococcus jannaschii (strain ATCC 43067 / DSM 2661 / JAL-1 / JCM 10045 / NBRC 100440) (Methanococcus jannaschii).